The chain runs to 38 residues: Photosystem II reaction center protein L (38 aa).

Residues 17-37 (SLYWGLLLMFVLAVLFSSYFF) traverse the membrane as a helical segment.

It belongs to the PsbL family. PSII is composed of 1 copy each of membrane proteins PsbA, PsbB, PsbC, PsbD, PsbE, PsbF, PsbH, PsbI, PsbJ, PsbK, PsbL, PsbM, PsbT, PsbX, PsbY, PsbZ, Psb30/Ycf12, at least 3 peripheral proteins of the oxygen-evolving complex and a large number of cofactors. It forms dimeric complexes.

It localises to the plastid. The protein resides in the chloroplast thylakoid membrane. Functionally, one of the components of the core complex of photosystem II (PSII). PSII is a light-driven water:plastoquinone oxidoreductase that uses light energy to abstract electrons from H(2)O, generating O(2) and a proton gradient subsequently used for ATP formation. It consists of a core antenna complex that captures photons, and an electron transfer chain that converts photonic excitation into a charge separation. This subunit is found at the monomer-monomer interface and is required for correct PSII assembly and/or dimerization. This chain is Photosystem II reaction center protein L, found in Emiliania huxleyi (Coccolithophore).